Consider the following 488-residue polypeptide: Leucine-rich repeat-containing protein 74A (488 aa).

LRR repeat units follow at residues 134-155 (AVTKLELEDNCIMEEGVLSLVE), 162-182 (YLQEMNISNNHLGLEGARIIS), 191-212 (SIWSLELSGNDFKEDSAALLCQ), 219-239 (QIKKLDLSHNQFSDVGGEHLG), 247-268 (GLTSLDLSWNNFHTRGAVALCN), 275-296 (TLTKLDLSMNGFGNEVALALGE), 303-324 (CLVYLDIGGNDIGNEGASKISK), and 331-351 (SLRVLKLFLNPINMDGAILLI).

This Homo sapiens (Human) protein is Leucine-rich repeat-containing protein 74A.